Consider the following 980-residue polypeptide: Putative leucine-rich repeat receptor-like serine/threonine-protein kinase At2g24130 (980 aa).

Residues 1 to 20 form the signal peptide; it reads MDYCSLLVVSFLITVMTVLA. Residues 21-593 lie on the Extracellular side of the membrane; the sequence is SKENDHELIK…ACKKKHKYPS (573 aa). N-linked (GlcNAc...) asparagine glycans are attached at residues asparagine 55 and asparagine 88. LRR repeat units follow at residues 65–89, 90–113, 115–138, 139–162, 165–189, 191–214, 215–238, and 240–263; these read STQV…IANL, TGLT…IGSL, ETLK…LGLL, NRLV…LFCN, SSSL…YHCH, KELR…LSNS, TNLK…VISK, and PQLQ…NLEP. 4 N-linked (GlcNAc...) asparagine glycosylation sites follow: asparagine 152, asparagine 162, asparagine 175, and asparagine 213. 2 N-linked (GlcNAc...) asparagine glycosylation sites follow: asparagine 257 and asparagine 270. 12 LRR repeats span residues 271-295, 296-320, 322-344, 345-370, 372-391, 392-416, 417-440, 442-463, 464-490, 491-514, 515-537, and 539-563; these read SSDL…VRHL, SVNL…ISNL, NLTL…LCKL, SKLE…DIPR, GLLD…SFGN, LSQL…LGKC, INLE…VVSN, RNLK…PLEL, SKMD…LGSC, IALE…LGQL, PYLK…SFQQ, and STLK…SFSK. Residues asparagine 322 and asparagine 327 are each glycosylated (N-linked (GlcNAc...) asparagine). Residues asparagine 380 and asparagine 391 are each glycosylated (N-linked (GlcNAc...) asparagine). N-linked (GlcNAc...) asparagine glycosylation is found at asparagine 428 and asparagine 449. N-linked (GlcNAc...) asparagine glycosylation is present at asparagine 497. Asparagine 545 and asparagine 554 each carry an N-linked (GlcNAc...) asparagine glycan. The chain crosses the membrane as a helical span at residues 594-614; that stretch reads VLLPVLLSLIATPVLCVFGYP. Residues 615-980 are Cytoplasmic-facing; sequence LVQRSRFGKN…SQETQGEASS (366 aa). Threonine 658 is modified (phosphothreonine). The 300-residue stretch at 661 to 960 folds into the Protein kinase domain; the sequence is FNASSLIGSG…HEMGRLKEYL (300 aa). Residues 667–675 and lysine 689 each bind ATP; that span reads IGSGRFGHV. Tyrosine 775 bears the Phosphotyrosine mark. The active-site Proton acceptor is the aspartate 788. Position 841 is a phosphotyrosine (tyrosine 841).

This sequence belongs to the protein kinase superfamily. Ser/Thr protein kinase family.

The protein localises to the cell membrane. It catalyses the reaction L-seryl-[protein] + ATP = O-phospho-L-seryl-[protein] + ADP + H(+). It carries out the reaction L-threonyl-[protein] + ATP = O-phospho-L-threonyl-[protein] + ADP + H(+). The polypeptide is Putative leucine-rich repeat receptor-like serine/threonine-protein kinase At2g24130 (Arabidopsis thaliana (Mouse-ear cress)).